Consider the following 364-residue polypeptide: Developmentally-regulated GTP-binding protein 2 (364 aa).

The residue at position 21 (Lys21) is a (3S)-3-hydroxylysine. In terms of domain architecture, OBG-type G spans Ala63 to Ala288. GTP is bound by residues Gly69–Ser76, Phe94–Thr98, Asp115–Gly118, Asn246–Asp249, and Ser269–Gly271. Mg(2+) contacts are provided by Ser76 and Thr96. The 76-residue stretch at Ala288 to Lys363 folds into the TGS domain.

It belongs to the TRAFAC class OBG-HflX-like GTPase superfamily. OBG GTPase family. As to quaternary structure, interacts with RWDD1; this interaction confers protection to polyubiquitination and proteolytic degradation. Interacts with JMJD7; this interaction is direct. Requires Mg(2+) as cofactor. Post-translationally, hydroxylated (with S stereochemistry) at C-3 of Lys-21 by JMJD7; this modification hinders trypsin-catalyzed proteolysis in vitro. Polyubiquitinated. As to expression, highest levels in skeletal muscle, heart and kidney. Low levels in colon, thymus, spleen, small intestine, lung and Leukocytes.

The protein localises to the nucleus. The protein resides in the cytoplasm. It carries out the reaction GTP + H2O = GDP + phosphate + H(+). In terms of biological role, catalyzes the conversion of GTP to GDP through hydrolysis of the gamma-phosphate bond in GTP. When hydroxylated at C-3 of 'Lys-21' by JMJD7, may bind to RNA and play a role in translation. The sequence is that of Developmentally-regulated GTP-binding protein 2 from Homo sapiens (Human).